The following is a 211-amino-acid chain: Ribosomal RNA small subunit methyltransferase G (211 aa).

S-adenosyl-L-methionine-binding positions include G76, L81, 127–128 (VE), and R142.

Belongs to the methyltransferase superfamily. RNA methyltransferase RsmG family.

The protein localises to the cytoplasm. It carries out the reaction guanosine(527) in 16S rRNA + S-adenosyl-L-methionine = N(7)-methylguanosine(527) in 16S rRNA + S-adenosyl-L-homocysteine. Its function is as follows. Specifically methylates the N7 position of guanine in position 527 of 16S rRNA. The chain is Ribosomal RNA small subunit methyltransferase G from Vibrio vulnificus (strain CMCP6).